Here is a 162-residue protein sequence, read N- to C-terminus: Putative auxin-responsive protein IAA28 (162 aa).

The 96-residue stretch at 23-118 folds into the PB1 domain; sequence SRFVKVFMHG…TVKRIYIVPA (96 aa). Residues 122–141 are disordered; the sequence is NESEYQEEEEDNAAAAATAD.

Belongs to the Aux/IAA family. Homodimers and heterodimers.

Its subcellular location is the nucleus. Functionally, aux/IAA proteins are short-lived transcriptional factors that function as repressors of early auxin response genes at low auxin concentrations. The protein is Putative auxin-responsive protein IAA28 (IAA28) of Oryza sativa subsp. japonica (Rice).